The sequence spans 158 residues: Transcription elongation factor GreA (158 aa).

This sequence belongs to the GreA/GreB family.

Necessary for efficient RNA polymerase transcription elongation past template-encoded arresting sites. The arresting sites in DNA have the property of trapping a certain fraction of elongating RNA polymerases that pass through, resulting in locked ternary complexes. Cleavage of the nascent transcript by cleavage factors such as GreA or GreB allows the resumption of elongation from the new 3'terminus. GreA releases sequences of 2 to 3 nucleotides. In Methylobacterium nodulans (strain LMG 21967 / CNCM I-2342 / ORS 2060), this protein is Transcription elongation factor GreA.